Here is a 367-residue protein sequence, read N- to C-terminus: Endopolygalacturonase B (367 aa).

Positions 1–17 (MHFQLLGLAALGSLAAA) are cleaved as a signal peptide. Residues 18–30 (APAPSRTSELVER) constitute a propeptide that is removed on maturation. C34 and C49 form a disulfide bridge. 5 PbH1 repeats span residues 161 to 191 (GNDV…DVSE), 192 to 213 (SNGV…AINS), 214 to 234 (GENI…SIGS), 243 to 264 (VKNV…RIKT), and 272 to 294 (VSGV…VIEQ). D206 (proton donor) is an active-site residue. A disulfide bridge links C208 with C224. The active site involves H228. N-linked (GlcNAc...) asparagine glycosylation is present at N279. Disulfide bonds link C334–C339 and C358–C367.

This sequence belongs to the glycosyl hydrolase 28 family.

The protein resides in the secreted. The enzyme catalyses (1,4-alpha-D-galacturonosyl)n+m + H2O = (1,4-alpha-D-galacturonosyl)n + (1,4-alpha-D-galacturonosyl)m.. Involved in maceration and soft-rotting of plant tissue. Hydrolyzes the 1,4-alpha glycosidic bonds of de-esterified pectate in the smooth region of the plant cell wall. The polypeptide is Endopolygalacturonase B (pgaB) (Aspergillus flavus (strain ATCC MYA-384 / AF70)).